We begin with the raw amino-acid sequence, 162 residues long: Ecotin (162 aa).

Residues 1–18 (MFVPAVVFAALASTSAWA) form the signal peptide. A disulfide bridge connects residues C70 and C107.

This sequence belongs to the protease inhibitor I11 (ecotin) family. As to quaternary structure, homodimer.

It localises to the periplasm. General inhibitor of pancreatic serine proteases: inhibits chymotrypsin, trypsin, elastases, factor X, kallikrein as well as a variety of other proteases. The sequence is that of Ecotin from Salmonella choleraesuis (strain SC-B67).